The primary structure comprises 600 residues: Glutamine--fructose-6-phosphate aminotransferase [isomerizing] (600 aa).

Residue C2 is the Nucleophile; for GATase activity of the active site. The Glutamine amidotransferase type-2 domain occupies 2–217 (CGIVGYIGQN…DKEIVLVSRN (216 aa)). 2 consecutive SIS domains span residues 283–422 (IRTA…VKGL) and 452–590 (LARD…VDKP). Catalysis depends on K595, which acts as the For Fru-6P isomerization activity.

As to quaternary structure, homodimer.

Its subcellular location is the cytoplasm. It carries out the reaction D-fructose 6-phosphate + L-glutamine = D-glucosamine 6-phosphate + L-glutamate. In terms of biological role, catalyzes the first step in hexosamine metabolism, converting fructose-6P into glucosamine-6P using glutamine as a nitrogen source. The sequence is that of Glutamine--fructose-6-phosphate aminotransferase [isomerizing] from Oceanobacillus iheyensis (strain DSM 14371 / CIP 107618 / JCM 11309 / KCTC 3954 / HTE831).